The primary structure comprises 351 residues: Protein RecA (351 aa).

Position 68 to 75 (68 to 75 (GPESSGKT)) interacts with ATP.

This sequence belongs to the RecA family.

It is found in the cytoplasm. Can catalyze the hydrolysis of ATP in the presence of single-stranded DNA, the ATP-dependent uptake of single-stranded DNA by duplex DNA, and the ATP-dependent hybridization of homologous single-stranded DNAs. It interacts with LexA causing its activation and leading to its autocatalytic cleavage. The protein is Protein RecA of Chloroflexus aurantiacus (strain ATCC 29364 / DSM 637 / Y-400-fl).